The following is a 385-amino-acid chain: Cytochrome b (385 aa).

Transmembrane regions (helical) follow at residues 32–52 (LGSL…FMAM), 76–98 (WLLR…MHIA), 113–133 (VWIV…LGYC), and 179–199 (FFAL…MHFM). Positions 82 and 96 each coordinate heme b. The heme b site is built by H183 and H197. H202 contributes to the a ubiquinone binding site. Helical transmembrane passes span 225-245 (FIFK…LFVF), 289-309 (LLGV…PITD), 321-341 (LSKF…QIGQ), and 348-368 (FVLM…IIVP).

It belongs to the cytochrome b family. As to quaternary structure, fungal cytochrome b-c1 complex contains 10 subunits; 3 respiratory subunits, 2 core proteins and 5 low-molecular weight proteins. Cytochrome b-c1 complex is a homodimer. Heme b is required as a cofactor.

The protein resides in the mitochondrion inner membrane. Functionally, component of the ubiquinol-cytochrome c reductase complex (complex III or cytochrome b-c1 complex) that is part of the mitochondrial respiratory chain. The b-c1 complex mediates electron transfer from ubiquinol to cytochrome c. Contributes to the generation of a proton gradient across the mitochondrial membrane that is then used for ATP synthesis. This chain is Cytochrome b (COB), found in Candida glabrata (strain ATCC 2001 / BCRC 20586 / JCM 3761 / NBRC 0622 / NRRL Y-65 / CBS 138) (Yeast).